We begin with the raw amino-acid sequence, 151 residues long: Large ribosomal subunit protein bL9 (151 aa).

The protein belongs to the bacterial ribosomal protein bL9 family.

Binds to the 23S rRNA. This is Large ribosomal subunit protein bL9 from Prochlorococcus marinus (strain MIT 9515).